We begin with the raw amino-acid sequence, 358 residues long: Probable (S)-tetrahydroprotoberberine N-methyltransferase 2 (358 aa).

S-adenosyl-L-methionine contacts are provided by S98, G136, N160, Q164, D186, V187, and I202. The active site involves C333.

This sequence belongs to the CFA/CMAS family. Homodimer.

Its subcellular location is the cytoplasm. The enzyme catalyses (S)-stylopine + S-adenosyl-L-methionine = (S)-cis-N-methylstylopine + S-adenosyl-L-homocysteine. It carries out the reaction (S)-tetrahydropalmatine + S-adenosyl-L-methionine = (S)-cis-N-methyltetrahydropalmatine + S-adenosyl-L-homocysteine. It functions in the pathway alkaloid biosynthesis. In terms of biological role, N-methyltransferase with a strict substrate specificity for (R,S)-tetrahydropalmatine or (R,S)-stylopine. The chain is Probable (S)-tetrahydroprotoberberine N-methyltransferase 2 from Papaver bracteatum (Great scarlet poppy).